Reading from the N-terminus, the 101-residue chain is Large ribosomal subunit protein bL21 (101 aa).

The protein belongs to the bacterial ribosomal protein bL21 family. In terms of assembly, part of the 50S ribosomal subunit. Contacts protein L20.

Its function is as follows. This protein binds to 23S rRNA in the presence of protein L20. This chain is Large ribosomal subunit protein bL21, found in Metamycoplasma arthritidis (strain 158L3-1) (Mycoplasma arthritidis).